Reading from the N-terminus, the 269-residue chain is Zinc transporter ZupT (269 aa).

The next 8 membrane-spanning stretches (helical) occupy residues Val-5–Ile-25, Ser-38–Val-58, Trp-75–Ile-95, Met-125–Phe-145, Ile-158–Phe-178, Leu-190–Met-210, Phe-212–Ile-232, and Leu-249–Val-269. The Fe(2+) site is built by Asn-137 and Glu-140. The Zn(2+) site is built by Glu-140 and His-165. Asn-166, Glu-169, and Glu-198 together coordinate Fe(2+). Glu-169 is a binding site for Zn(2+).

The protein belongs to the ZIP transporter (TC 2.A.5) family. ZupT subfamily.

The protein localises to the cell membrane. It catalyses the reaction Zn(2+)(in) = Zn(2+)(out). In terms of biological role, mediates zinc uptake. May also transport other divalent cations. In Lysinibacillus sphaericus (strain C3-41), this protein is Zinc transporter ZupT.